A 262-amino-acid polypeptide reads, in one-letter code: Acyl-[acyl-carrier-protein]--UDP-N-acetylglucosamine O-acyltransferase (262 aa).

The protein belongs to the transferase hexapeptide repeat family. LpxA subfamily. As to quaternary structure, homotrimer.

Its subcellular location is the cytoplasm. The enzyme catalyses a (3R)-hydroxyacyl-[ACP] + UDP-N-acetyl-alpha-D-glucosamine = a UDP-3-O-[(3R)-3-hydroxyacyl]-N-acetyl-alpha-D-glucosamine + holo-[ACP]. Its pathway is glycolipid biosynthesis; lipid IV(A) biosynthesis; lipid IV(A) from (3R)-3-hydroxytetradecanoyl-[acyl-carrier-protein] and UDP-N-acetyl-alpha-D-glucosamine: step 1/6. Involved in the biosynthesis of lipid A, a phosphorylated glycolipid that anchors the lipopolysaccharide to the outer membrane of the cell. The chain is Acyl-[acyl-carrier-protein]--UDP-N-acetylglucosamine O-acyltransferase from Salmonella heidelberg (strain SL476).